A 364-amino-acid polypeptide reads, in one-letter code: 1-aminocyclopropane-1-carboxylate oxidase homolog 11 (364 aa).

One can recognise a Fe2OG dioxygenase domain in the interval 213 to 312; that stretch reads KSLLMICHYY…RISVASFFSS (100 aa). Residues histidine 237, aspartate 239, and histidine 293 each coordinate Fe cation. Arginine 303 is a binding site for 2-oxoglutarate.

This sequence belongs to the iron/ascorbate-dependent oxidoreductase family. The cofactor is Fe(2+).

This chain is 1-aminocyclopropane-1-carboxylate oxidase homolog 11, found in Arabidopsis thaliana (Mouse-ear cress).